We begin with the raw amino-acid sequence, 471 residues long: Glycosyl hydrolase family 109 protein 1 (471 aa).

The first 15 residues, 1 to 15, serve as a signal peptide directing secretion; the sequence is MIKNLSTFFVGIALS. Cysteine 16 carries N-palmitoyl cysteine lipidation. The S-diacylglycerol cysteine moiety is linked to residue cysteine 16. NAD(+)-binding positions include 70 to 71, aspartate 92, 141 to 144, 161 to 162, and asparagine 190; these read MR, WKHH, and EV. Residues tyrosine 219, arginine 235, 247 to 250, and tyrosine 325 contribute to the substrate site; that span reads YATH. Tyrosine 247 lines the NAD(+) pocket.

Belongs to the Gfo/Idh/MocA family. Glycosyl hydrolase 109 subfamily. NAD(+) is required as a cofactor.

It localises to the cell membrane. Its function is as follows. Glycosidase. In Phocaeicola vulgatus (strain ATCC 8482 / DSM 1447 / JCM 5826 / CCUG 4940 / NBRC 14291 / NCTC 11154) (Bacteroides vulgatus), this protein is Glycosyl hydrolase family 109 protein 1.